A 261-amino-acid chain; its full sequence is Short chain dehydrogenase/reductase astE (261 aa).

4 residues coordinate NADP(+): isoleucine 24, aspartate 70, asparagine 97, and lysine 131. Active-site proton donor residues include serine 150 and tyrosine 164. Residues tyrosine 164, lysine 168, valine 197, and threonine 199 each coordinate NADP(+). Lysine 168 acts as the Lowers pKa of active site Tyr in catalysis.

It belongs to the short-chain dehydrogenases/reductases (SDR) family.

The protein operates within secondary metabolite biosynthesis; terpenoid biosynthesis. Functionally, short chain dehydrogenase/reductase; part of the gene cluster that mediates the biosynthesis of astellolides, drimane-type sesquiterpene esters that show antimicrobial, anti-inflammatory, and anti-tumor activities. The first step in astellolide biosynthesis is performed by the sesquiterpene cyclase astC that catalyzes the formation of drimanyl pyrophosphate from farnesyl pyrophosphate. Drimanyl pyrophosphate is then dephosphorylated by the sesquiterpene phosphatase astI to produce drimanyl monophosphate which is further dephosphorylated to drim-8-ene-11-ol by atsK. Drim-8-ene-11-ol is converted to confertifolin, probably by the cytochrome P450 monooxygenase astD and/or the dehydrogenase astE. The cytochrome P450 monooxygenases astB, astF and astJ then hydroxylate confertifolin at C6, C14, or C15 to form trihydroxy confertifolin. The nonribosomal peptide synthetase astA catalyzes ester bond formation between trihydroxy contifolin and benzoic acid (BA) or 4-hydroxy benzoic acid (4HBA), leading to the formation of dideacetyl astellolides A and B, respectively. Finally, the O-acetyltransferase astG converts dideacetyl astellolides A and B into deacetyl astellolides A and B. The chain is Short chain dehydrogenase/reductase astE from Aspergillus oryzae (strain ATCC 42149 / RIB 40) (Yellow koji mold).